We begin with the raw amino-acid sequence, 144 residues long: MESPLGSDLARLVRIWRALIDHRLKPLELTQTHWVTLHNIHQLPPDQSQIQLAKAIGIEQPSLVRTLDQLEDKGLISRQTCASDRRAKRIKLTEKADALIAEMEEVIHKTRGEILAGISSEEIELLIKLIAKLEHNIMELHSHD.

The HTH marR-type domain maps to 2 to 135 (ESPLGSDLAR…LIKLIAKLEH (134 aa)). Residues 49 to 72 (QIQLAKAIGIEQPSLVRTLDQLED) constitute a DNA-binding region (H-T-H motif).

Belongs to the SlyA family. Homodimer.

It is found in the cytoplasm. Functionally, transcription regulator that can specifically activate or repress expression of target genes. Required for virulence and survival in the macrophage environment. Probably activates the transcription of ssrB. Independently of ssrB activation, capable of stimulating the expression of virulence genes found on pathogenicity island 2 (SPI2). Probably activates expression of ispA, xseB genes, and of omp operon. The chain is Transcriptional regulator SlyA from Salmonella typhimurium (strain LT2 / SGSC1412 / ATCC 700720).